Here is a 250-residue protein sequence, read N- to C-terminus: Cyclin-Q (250 aa).

Position 1 is an N-acetylmethionine (Met1). The span at 1-10 (MEAVRPDSCE) shows a compositional bias: basic and acidic residues. The segment at 1–22 (MEAVRPDSCERGTAAARAEERP) is disordered.

This sequence belongs to the cyclin family. Cyclin-like FAM58 subfamily. In terms of assembly, associates with CDK10 to promote its kinase activity.

Its function is as follows. Activating cyclin for the cyclin-associated kinase CDK10. The protein is Cyclin-Q (Ccnq) of Rattus norvegicus (Rat).